The chain runs to 44 residues: MSDKHDKPDISEVTKFDKSKLKKTETHEKNPLPTKETIDQEKQG.

The segment at 1–44 is disordered; it reads MSDKHDKPDISEVTKFDKSKLKKTETHEKNPLPTKETIDQEKQG. Position 2 is an N-acetylserine (S2).

As to expression, expressed in regenerating axons.

Its subcellular location is the cytoplasm. The protein resides in the cytoskeleton. Plays an important role in the organization of the cytoskeleton. Binds to and sequesters actin monomers (G actin) and therefore inhibits actin polymerization. May be involved in the regulation of structural plasticity in the CNS. This Aplysia californica (California sea hare) protein is Thymosin beta.